The sequence spans 173 residues: Alpha-crystallin A chain (173 aa).

The residue at position 1 (methionine 1) is an N-acetylmethionine. The interval methionine 1–glutamate 63 is required for complex formation with BFSP1 and BFSP2. The residue at position 6 (glutamine 6) is a Deamidated glutamine; partial. Serine 45 is subject to Phosphoserine. Deamidated glutamine; partial is present on glutamine 50. The 111-residue stretch at leucine 52 to serine 162 folds into the sHSP domain. Lysine 70 carries the post-translational modification N6-acetyllysine. Deamidated glutamine; partial is present on glutamine 90. Residue lysine 99 is modified to N6-acetyllysine. Histidine 100 is a binding site for Zn(2+). Position 101 is a deamidated asparagine; partial (asparagine 101). 2 residues coordinate Zn(2+): glutamate 102 and histidine 107. Serine 122 bears the Phosphoserine mark. The residue at position 123 (asparagine 123) is a Deamidated asparagine; partial. The disordered stretch occupies residues proline 144–serine 173. Basic and acidic residues predominate over residues glycine 153–proline 167. Histidine 154 is a binding site for Zn(2+). The O-linked (GlcNAc) serine glycan is linked to serine 162.

This sequence belongs to the small heat shock protein (HSP20) family. As to quaternary structure, heteromer composed of three CRYAA and one CRYAB subunits. Inter-subunit bridging via zinc ions enhances stability, which is crucial as there is no protein turn over in the lens. Can also form homodimers and homotetramers (dimers of dimers) which serve as the building blocks of homooligomers. Within homooligomers, the zinc-binding motif is created from residues of 3 different molecules. His-100 and Glu-102 from one molecule are ligands of the zinc ion, and His-107 and His-154 residues from additional molecules complete the site with tetrahedral coordination geometry. Part of a complex required for lens intermediate filament formation composed of BFSP1, BFSP2 and CRYAA. Post-translationally, acetylation at Lys-70 may increase chaperone activity. In terms of processing, undergoes age-dependent proteolytical cleavage at the C-terminus.

It is found in the cytoplasm. It localises to the nucleus. Functionally, contributes to the transparency and refractive index of the lens. Acts as a chaperone, preventing aggregation of various proteins under a wide range of stress conditions. Required for the correct formation of lens intermediate filaments as part of a complex composed of BFSP1, BFSP2 and CRYAA. The polypeptide is Alpha-crystallin A chain (CRYAA) (Equus caballus (Horse)).